Consider the following 762-residue polypeptide: cGMP-dependent protein kinase 2 (762 aa).

The segment at 1-25 is disordered; that stretch reads MGNGSVKPKHSKHPDGHSGNLTTDA. Gly2 carries N-myristoyl glycine lipidation. Positions 23-85 form a coiled coil; it reads TDALRNKVTE…CIQLNKLQDV (63 aa). Residues Ser110 and Ser117 each carry the phosphoserine modification. Residues 117–138 form a disordered region; that stretch reads SRRGAKAGVSAEPTTRTYDLNK. Residues 168–283 form a cGMP-binding, high affinity; cAMP-binding, moderate affinity region; sequence FLKRLDPQQI…DEQYRNFLRS (116 aa). 3',5'-cyclic AMP is bound by residues 232–235 and 242–243; these read GELA and RT. 3',5'-cyclic GMP contacts are provided by residues 232–235, 242–243, Lys347, 356–359, 366–367, Asp412, and Arg415; these read GELA, RT, GEKA, and RS. Residues 286-416 are cGMP-binding, high affinity; cAMP-binding, low affinity; the sequence is LLKNLPEDKL…NLNRDDEKRH (131 aa). A Phosphoserine modification is found at Ser431. Residues 453–711 enclose the Protein kinase domain; it reads LEIIATLGVG…INDIKKHRWL (259 aa). ATP contacts are provided by residues 459–467 and Lys482; that span reads LGVGGFGRV. The active-site Proton acceptor is Asp576. A Phosphothreonine modification is found at Thr609. One can recognise an AGC-kinase C-terminal domain in the interval 712 to 762; sequence NGFNWEGLKARSLPSPLQRELKGPIDHSYFDKYPPEKGMPPDELSGWDKDF. The interval 740–762 is disordered; the sequence is YFDKYPPEKGMPPDELSGWDKDF.

It belongs to the protein kinase superfamily. AGC Ser/Thr protein kinase family. cGMP subfamily. In terms of assembly, interacts with GRIA1/GLUR1. Post-translationally, myristoylation mediates membrane localization. In terms of tissue distribution, highly concentrated in brain, lung and intestinal mucosa.

It localises to the apical cell membrane. The catalysed reaction is L-seryl-[protein] + ATP = O-phospho-L-seryl-[protein] + ADP + H(+). It catalyses the reaction L-threonyl-[protein] + ATP = O-phospho-L-threonyl-[protein] + ADP + H(+). Its activity is regulated as follows. Binding of cGMP results in enzyme activation. Functionally, crucial regulator of intestinal secretion and bone growth. Phosphorylates and activates CFTR on the plasma membrane. Plays a key role in intestinal secretion by regulating cGMP-dependent translocation of CFTR in jejunum. Acts downstream of NMDAR to activate the plasma membrane accumulation of GRIA1/GLUR1 in synapse and increase synaptic plasticity. Phosphorylates GRIA1/GLUR1 at Ser-863. Acts as a regulator of gene expression and activator of the extracellular signal-regulated kinases MAPK3/ERK1 and MAPK1/ERK2 in mechanically stimulated osteoblasts. Under fluid shear stress, mediates ERK activation and subsequent induction of FOS, FOSL1/FRA1, FOSL2/FRA2 and FOSB that play a key role in the osteoblast anabolic response to mechanical stimulation. The sequence is that of cGMP-dependent protein kinase 2 (PRKG2) from Homo sapiens (Human).